A 459-amino-acid chain; its full sequence is Zinc finger protein ZPR1 (459 aa).

Residues 1-29 (MSAGGAVEPGLPAAAAAPSAAPARDPGPG) are compositionally biased toward low complexity. The disordered stretch occupies residues 1–43 (MSAGGAVEPGLPAAAAAPSAAPARDPGPGHLFRPISAEDEEQQ). 2 consecutive C4-type zinc fingers follow at residues 51 to 83 (CMNC…CEHC) and 259 to 291 (CPEC…CENC). Residues 438-459 (NEELGLNDMKTEGYETGLPAQR) are disordered.

Belongs to the ZPR1 family. Component of an import snRNP complex composed of KPNB1, SNUPN, SMN1 and ZNF259. Interacts (via C-terminal region) with SMN1 (via C-terminal region); the interaction occurs after treatment with serum. Interacts with elongation factor 1-alpha EEF1A1; the interaction occurs in a epidermal growth factor (EGF)-dependent manner. Interacts (via zinc fingers) with EGFR (via C-terminal cytoplasmic kinase domain); the interaction is negatively regulated in response to epidermal growth factor (EGF) stimulation and EGFR kinase activity. May also bind to the PDGFR receptor.

It is found in the nucleus. The protein resides in the cytoplasm. Its subcellular location is the nucleolus. It localises to the perinuclear region. The protein localises to the gem. It is found in the cajal body. The protein resides in the cell projection. Its subcellular location is the axon. It localises to the growth cone. Acts as a signaling molecule that communicates proliferative growth signals from the cytoplasm to the nucleus. Plays a role for the localization and accumulation of the survival motor neuron protein SMN1 in sub-nuclear bodies, including gems and Cajal bodies. Induces neuron differentiation and stimulates axonal growth and formation of growth cone in spinal cord motor neurons. Plays a role in the splicing of cellular pre-mRNAs. May be involved in H(2)O(2)-induced neuronal cell death. The polypeptide is Zinc finger protein ZPR1 (ZNF259) (Bos taurus (Bovine)).